A 194-amino-acid polypeptide reads, in one-letter code: ATP-dependent Clp protease proteolytic subunit (194 aa).

Ser98 serves as the catalytic Nucleophile. His123 is a catalytic residue.

Belongs to the peptidase S14 family. As to quaternary structure, fourteen ClpP subunits assemble into 2 heptameric rings which stack back to back to give a disk-like structure with a central cavity, resembling the structure of eukaryotic proteasomes.

It localises to the cytoplasm. It catalyses the reaction Hydrolysis of proteins to small peptides in the presence of ATP and magnesium. alpha-casein is the usual test substrate. In the absence of ATP, only oligopeptides shorter than five residues are hydrolyzed (such as succinyl-Leu-Tyr-|-NHMec, and Leu-Tyr-Leu-|-Tyr-Trp, in which cleavage of the -Tyr-|-Leu- and -Tyr-|-Trp bonds also occurs).. Functionally, cleaves peptides in various proteins in a process that requires ATP hydrolysis. Has a chymotrypsin-like activity. Plays a major role in the degradation of misfolded proteins. This is ATP-dependent Clp protease proteolytic subunit from Aliarcobacter butzleri (strain RM4018) (Arcobacter butzleri).